The following is a 270-amino-acid chain: uncharacterized protein (270 aa).

The first 22 residues, 1–22, serve as a signal peptide directing secretion; the sequence is MEYIKKLLCTMSVLLLIIFIGG. The N-palmitoyl cysteine moiety is linked to residue Cys-23. The S-diacylglycerol cysteine moiety is linked to residue Cys-23.

It belongs to the staphylococcal tandem lipoprotein family.

It localises to the cell membrane. This is an uncharacterized protein from Staphylococcus aureus (strain bovine RF122 / ET3-1).